A 520-amino-acid chain; its full sequence is MHVLSNPKHVTWLTQMGLDQIGEAYWQLGVPELVEHAIHNSEGVLSAEGALVCSTGKFTGRSPQDKFIVEDEKTRDTIWWGPVNNPFDSKQFDALYEKVTQFLQGKRVYIRDGYASALPEYKLNLRTVTTQSWTNLFVNNLFLRPIDKELTKFSPDFLILQVPEFQADPHVDGTKNANFTIINFTKRVILIGGTGFAGEIKKAVFTVLNYLLPQEHQVLPMHCSANVGTDGNTAIYFGLSGTGKTTLSADPNRKLIGDDEHGWCDKGIFNFEGGCYAKTINLAKESEPQIFDAIKFGTIVENMRFFAGTRTIDYKDSSITENVRCAYPLEYIPGALIPSIGSIPKHIFFLSCDAYGVLPPISQLDKDQAIHYFLSGYTAKIAGTEAGISAPKAVFSACFGAPFLPLHPTRYATMLADKLEKYEVTVWLVNTGWIGGGYGIGKRIDLNYTRAMVTAALSGELAKAGFEKDAIFNLSIPNACPEVPTHILNPSNTWNSVKEYELEAHKLMEAFASNFALYCD.

Arginine 61, phenylalanine 196, and lysine 202 together coordinate substrate. ATP-binding positions include lysine 202, histidine 222, and 238–246 (GLSGTGKTT). 2 residues coordinate Mn(2+): lysine 202 and histidine 222. Aspartate 259 serves as a coordination point for Mn(2+). ATP is bound by residues glutamate 287, arginine 324, 443–444 (RI), and threonine 449. Arginine 324 serves as a coordination point for substrate.

Belongs to the phosphoenolpyruvate carboxykinase (ATP) family. Mn(2+) serves as cofactor.

It localises to the cytoplasm. It carries out the reaction oxaloacetate + ATP = phosphoenolpyruvate + ADP + CO2. The protein operates within carbohydrate biosynthesis; gluconeogenesis. Functionally, involved in the gluconeogenesis. Catalyzes the conversion of oxaloacetate (OAA) to phosphoenolpyruvate (PEP) through direct phosphoryl transfer between the nucleoside triphosphate and OAA. The polypeptide is Phosphoenolpyruvate carboxykinase (ATP) (Amoebophilus asiaticus (strain 5a2)).